Consider the following 248-residue polypeptide: tRNA (guanine-N(7)-)-methyltransferase (248 aa).

S-adenosyl-L-methionine contacts are provided by residues Gly-70, 93–94 (EI), 129–130 (NA), and Leu-149. The active site involves Asp-152. Residue 227 to 229 (SEE) participates in S-adenosyl-L-methionine binding.

It belongs to the class I-like SAM-binding methyltransferase superfamily. TrmB family.

The protein localises to the nucleus. The enzyme catalyses guanosine(46) in tRNA + S-adenosyl-L-methionine = N(7)-methylguanosine(46) in tRNA + S-adenosyl-L-homocysteine. It functions in the pathway tRNA modification; N(7)-methylguanine-tRNA biosynthesis. Its function is as follows. Catalyzes the formation of N(7)-methylguanine at position 46 (m7G46) in tRNA. This Drosophila mojavensis (Fruit fly) protein is tRNA (guanine-N(7)-)-methyltransferase.